Consider the following 268-residue polypeptide: Taurine import ATP-binding protein TauB (268 aa).

Residues 4-236 (LAIRNISMRF…EGVDADLREV (233 aa)) enclose the ABC transporter domain. Position 41–48 (41–48 (GPSGCGKT)) interacts with ATP.

Belongs to the ABC transporter superfamily. Taurine importer (TC 3.A.1.17.1) family. As to quaternary structure, the complex is composed of two ATP-binding proteins (TauB), two transmembrane proteins (TauC) and a solute-binding protein (TauA).

Its subcellular location is the cell inner membrane. The enzyme catalyses taurine(out) + ATP + H2O = taurine(in) + ADP + phosphate + H(+). Functionally, part of the ABC transporter complex TauABC involved in taurine import. Responsible for energy coupling to the transport system. The sequence is that of Taurine import ATP-binding protein TauB from Jannaschia sp. (strain CCS1).